Reading from the N-terminus, the 212-residue chain is Leucyl/phenylalanyl-tRNA--protein transferase (212 aa).

Belongs to the L/F-transferase family.

It localises to the cytoplasm. The catalysed reaction is N-terminal L-lysyl-[protein] + L-leucyl-tRNA(Leu) = N-terminal L-leucyl-L-lysyl-[protein] + tRNA(Leu) + H(+). The enzyme catalyses N-terminal L-arginyl-[protein] + L-leucyl-tRNA(Leu) = N-terminal L-leucyl-L-arginyl-[protein] + tRNA(Leu) + H(+). It catalyses the reaction L-phenylalanyl-tRNA(Phe) + an N-terminal L-alpha-aminoacyl-[protein] = an N-terminal L-phenylalanyl-L-alpha-aminoacyl-[protein] + tRNA(Phe). In terms of biological role, functions in the N-end rule pathway of protein degradation where it conjugates Leu, Phe and, less efficiently, Met from aminoacyl-tRNAs to the N-termini of proteins containing an N-terminal arginine or lysine. In Paracoccus denitrificans (strain Pd 1222), this protein is Leucyl/phenylalanyl-tRNA--protein transferase.